A 268-amino-acid polypeptide reads, in one-letter code: Universal stress protein MT3220 (268 aa).

Residues G13, 107–113 (GSVGLDH), R117, and 120–121 (SV) contribute to the ATP site.

This sequence belongs to the universal stress protein A family.

The chain is Universal stress protein MT3220 from Mycobacterium tuberculosis (strain CDC 1551 / Oshkosh).